The following is a 1804-amino-acid chain: Collagen alpha-1(XI) chain (1804 aa).

The N-terminal stretch at 1-34 is a signal peptide; sequence MEPWSRWKTKRWIWDLTISTLALTFLFQAREVRG. The propeptide at 35–511 is N-terminal propeptide; it reads AAPVDILKAL…SKGPTISAQE (477 aa). 2 cysteine pairs are disulfide-bonded: Cys60–Cys242 and Cys181–Cys235. Residues 70-242 form the Laminin G-like domain; the sequence is DVAYRVTEEA…DYCDHYSPDC (173 aa). A nonhelical region region spans residues 229 to 417; that stretch reads KAAYDYCDHY…DFTETSINGH (189 aa). Over residues 315–329 the composition is skewed to polar residues; it reads YQTETPRRVSGSNEP. Disordered regions lie at residues 315–334 and 433–506; these read YQTE…PVEE and EPGM…KGPT. Positions 418-506 are triple-helical region (interrupted); sequence GAYGEKGQKG…YGGDGSKGPT (89 aa). A Collagen-like 1 domain is found at 440–488; it reads GPPGPAGPAGLMGPPGLQGPSGLPGDPGDRGPPGRPGLPGADGLPGPPG. Low complexity-rich tracts occupy residues 447–465 and 477–494; these read PAGL…LPGD and LPGA…LMLP. A short nonhelical segment region spans residues 507–509; sequence ISA. The telopeptide stretch occupies residues 510–527; it reads QEAQAQAILQQARIALRG. The tract at residues 526–1567 is disordered; the sequence is RGPPGPMGLT…SIQGDAGDNI (1042 aa). 2 consecutive Collagen-like domains span residues 527–584 and 567–623; these read GPPG…GADG and PPGP…GPPG. Residues 528–1540 form a triple-helical region region; that stretch reads PPGPMGLTGR…PGPPGPPGEV (1013 aa). Gly residues-rich tracts occupy residues 539–548 and 581–590; these read GPVGGPGSAG and GADGGRGMPG. Lys610 is modified (allysine). Residues 639–655 show a composition bias toward low complexity; it reads PRGLPGEAGPRGLLGPR. Residues 697 to 708 show a composition bias toward pro residues; sequence QGLPGPQGPIGP. Over residues 715-726 the composition is skewed to low complexity; the sequence is QGKPGLAGLPGA. Positions 728–781 constitute a Collagen-like 4 domain; it reads GPPGHPGKEGQSGEKGALGPPGPQGPIGYPGPRGVKGADGVRGLKGSKGEKGED. A compositionally biased stretch (basic and acidic residues) spans 805–814; the sequence is RGEDGPEGPK. Low complexity-rich tracts occupy residues 873–901, 916–925, and 969–979; these read KPGP…PGPK, RGPQGPQGPV, and PQGPTGETGPI. The span at 1040 to 1049 shows a compositional bias: gly residues; that stretch reads GLKGGEGPQG. A compositionally biased stretch (pro residues) spans 1074 to 1083; sequence RPGPQGPPGP. Positions 1084 to 1108 are enriched in low complexity; sequence AGEKGAPGEKGPQGPAGRDGVQGPV. Residues 1160–1169 show a composition bias toward gly residues; the sequence is GIAGGDGEPG. The segment covering 1216–1227 has biased composition (pro residues); it reads MGPPGPPGPRGP. 2 stretches are compositionally biased toward low complexity: residues 1240-1249 and 1282-1296; these read PGSIGSVGVV and AGPP…IKGP. Residues 1341-1360 are compositionally biased toward pro residues; it reads QPGPPGPSGEAGPPGPPGKR. Low complexity-rich tracts occupy residues 1383–1392 and 1417–1426; these read AEGPPGKTGP and QGLPGAAGQD. Collagen-like domains follow at residues 1427–1482 and 1481–1539; these read GPPG…SPGA and GAKG…PPGE. Positions 1428–1437 are enriched in pro residues; sequence PPGPLGPPGL. Lys1450 bears the Allysine mark. Residues 1453 to 1462 show a composition bias toward low complexity; the sequence is PGLIGLIGPP. Over residues 1481-1490 the composition is skewed to gly residues; the sequence is GAKGDGGIPG. The segment covering 1491 to 1507 has biased composition (pro residues); it reads PAGPIGPPGPPGLPGPA. The segment covering 1509 to 1519 has biased composition (low complexity); it reads PKGNKGSSGPT. The span at 1528–1537 shows a compositional bias: pro residues; that stretch reads PGPPGPPGPP. A nonhelical region (C-terminal) region spans residues 1541 to 1561; sequence IQPLPILSPKKTRRHTESIQG. Positions 1562 to 1804 are cleaved as a propeptide — C-terminal propeptide; sequence DAGDNILDYS…FEVGPACFLG (243 aa). Residues 1575–1803 enclose the Fibrillar collagen NC1 domain; the sequence is EEIFGSLNSL…GFEVGPACFL (229 aa). Cysteines 1605 and 1637 form a disulfide. Ca(2+) is bound by residues Asp1623, Asn1625, Gln1626, Cys1628, and Asp1631. N-linked (GlcNAc...) asparagine glycosylation is present at Asn1638. 2 disulfide bridges follow: Cys1646/Cys1801 and Cys1712/Cys1755.

It belongs to the fibrillar collagen family. In terms of assembly, trimers composed of three different chains: alpha 1(XI), alpha 2(XI), and alpha 3(XI). Alpha 3(XI) is a post-translational modification of alpha 1(II). Alpha 1(V) can also be found instead of alpha 3(XI)=1(II). In terms of processing, prolines at the third position of the tripeptide repeating unit (G-X-Y) are hydroxylated in some or all of the chains. Post-translationally, N-glycosylated.

Its subcellular location is the secreted. It localises to the extracellular space. The protein localises to the extracellular matrix. Functionally, may play an important role in fibrillogenesis by controlling lateral growth of collagen II fibrils. This Mus musculus (Mouse) protein is Collagen alpha-1(XI) chain (Col11a1).